A 215-amino-acid polypeptide reads, in one-letter code: Nucleoside triphosphate pyrophosphatase (215 aa).

The active-site Proton acceptor is the Asp80.

It belongs to the Maf family. It depends on a divalent metal cation as a cofactor.

The protein localises to the cytoplasm. It carries out the reaction a ribonucleoside 5'-triphosphate + H2O = a ribonucleoside 5'-phosphate + diphosphate + H(+). The enzyme catalyses a 2'-deoxyribonucleoside 5'-triphosphate + H2O = a 2'-deoxyribonucleoside 5'-phosphate + diphosphate + H(+). Its function is as follows. Nucleoside triphosphate pyrophosphatase. May have a dual role in cell division arrest and in preventing the incorporation of modified nucleotides into cellular nucleic acids. This is Nucleoside triphosphate pyrophosphatase from Leifsonia xyli subsp. xyli (strain CTCB07).